Consider the following 365-residue polypeptide: 3-dehydroquinate synthase (365 aa).

Residues 69-74, 103-107, 127-128, K140, and K149 each bind NAD(+); these read DGEAHK, GVIGD, and TT. Residues E182, H245, and H262 each contribute to the Zn(2+) site.

This sequence belongs to the sugar phosphate cyclases superfamily. Dehydroquinate synthase family. The cofactor is NAD(+). It depends on Co(2+) as a cofactor. Requires Zn(2+) as cofactor.

It localises to the cytoplasm. The catalysed reaction is 7-phospho-2-dehydro-3-deoxy-D-arabino-heptonate = 3-dehydroquinate + phosphate. It participates in metabolic intermediate biosynthesis; chorismate biosynthesis; chorismate from D-erythrose 4-phosphate and phosphoenolpyruvate: step 2/7. Functionally, catalyzes the conversion of 3-deoxy-D-arabino-heptulosonate 7-phosphate (DAHP) to dehydroquinate (DHQ). The protein is 3-dehydroquinate synthase of Pseudomonas putida (strain ATCC 47054 / DSM 6125 / CFBP 8728 / NCIMB 11950 / KT2440).